Here is a 264-residue protein sequence, read N- to C-terminus: 3-methyl-2-oxobutanoate hydroxymethyltransferase (264 aa).

Mg(2+)-binding residues include D45 and D84. 3-methyl-2-oxobutanoate is bound by residues 45-46 (DS), D84, and K112. Position 114 (E114) interacts with Mg(2+). E181 (proton acceptor) is an active-site residue.

It belongs to the PanB family. Homodecamer; pentamer of dimers. The cofactor is Mg(2+).

Its subcellular location is the cytoplasm. It carries out the reaction 3-methyl-2-oxobutanoate + (6R)-5,10-methylene-5,6,7,8-tetrahydrofolate + H2O = 2-dehydropantoate + (6S)-5,6,7,8-tetrahydrofolate. Its pathway is cofactor biosynthesis; (R)-pantothenate biosynthesis; (R)-pantoate from 3-methyl-2-oxobutanoate: step 1/2. Catalyzes the reversible reaction in which hydroxymethyl group from 5,10-methylenetetrahydrofolate is transferred onto alpha-ketoisovalerate to form ketopantoate. This is 3-methyl-2-oxobutanoate hydroxymethyltransferase from Escherichia fergusonii (strain ATCC 35469 / DSM 13698 / CCUG 18766 / IAM 14443 / JCM 21226 / LMG 7866 / NBRC 102419 / NCTC 12128 / CDC 0568-73).